Here is a 304-residue protein sequence, read N- to C-terminus: N-carbamoyl-D-amino acid hydrolase (304 aa).

The 272-residue stretch at 5–276 (MILAVGQQGP…DEVITAAVCL (272 aa)) folds into the CN hydrolase domain. Catalysis depends on residues glutamate 47, lysine 127, and cysteine 172.

In terms of assembly, homotetramer.

The catalysed reaction is an N-carbamoyl-D-amino acid + H2O + 2 H(+) = a D-alpha-amino acid + NH4(+) + CO2. Its activity is regulated as follows. The activity decreases with increasing concentration of H(2)O(2). Has 68% and 43% of activity remaining upon treatment with 0.1 and 0.2 mM H(2)O(2) for 30 minutes, respectively. Inhibited significantly by 2 mM Zn(2+), Cu(2+) and Ag(+), moderately by Co(2+), Mn(2+), Sn(2+) and Mg(2+), and only slightly by Ba(2+). Slightly activated by Fe(2+) and Ca(2+). No effect on activity by metal chelators EDTA and 8-hydroxyquinoline at 2 mM or by dithiothreitol, 2-mercaptoethanol or phenylmethanesulfonyl fluoride. Functionally, catalyzes the hydrolysis of N-carbamoyl-D-amino acids to the corresponding D-amino acids. Hydrolyzes aromatic and aliphatic N-carbamoyl-D-amino acids in vitro. Effectively hydrolyzes N-carbamoyl-D-p-hydroxyphenylglycine and N-carbamoyl-DL-p-hydroxyphenylglycine, and to a lesser extent N-carbamoyl-D-methionine. No activity for N-carbamoyl-L-amino acids, N-carbamoyl-beta-alanine or (RS)-alpha-ethyl-N-carbamoylphenylglycine in vitro. This Ensifer adhaerens (Sinorhizobium morelense) protein is N-carbamoyl-D-amino acid hydrolase.